The chain runs to 1394 residues: ATP-dependent permease AUS1 (1394 aa).

Residues 1-420 (MSISKYFTPV…PLTTIGSYSR (420 aa)) lie on the Cytoplasmic side of the membrane. The ABC transporter 1 domain maps to 33–273 (KKSYDAEDSM…FRDTLGIEKD (241 aa)). Transmembrane regions (helical) follow at residues 421–443 (GSLT…PIAF), 468–490 (TVFD…YFLA), 497–519 (ARFF…LFAL), 529–551 (VANL…VIYL), 558–575 (FVWI…EAIL), and 636–658 (VWRN…LFAS). The Cytoplasmic segment spans residues 659–1080 (QYIKPYFNKD…QYICTKRDMT (422 aa)). An ABC transporter 2 domain is found at 751–978 (ISWKNINYTV…YFMSHDNTLV (228 aa)). Residue 782-789 (GESGAGKT) participates in ATP binding. The next 6 membrane-spanning stretches (helical) occupy residues 1081 to 1103 (YVMA…FWHI), 1107 to 1129 (IIGL…PLIN), 1156 to 1178 (VLLL…LFFV), 1193 to 1215 (AGVF…LWLI), 1224 to 1246 (AAVF…QPYS), and 1346 to 1368 (FGIE…YLTY). The Cytoplasmic segment spans residues 1369–1394 (VARIWPKVFKIITKVIPHRGKKPVQN).

This sequence belongs to the ABC transporter superfamily. ABCG family. PDR (TC 3.A.1.205) subfamily.

The protein localises to the membrane. In terms of biological role, transporter involved in the uptake of sterol. This Saccharomyces cerevisiae (strain ATCC 204508 / S288c) (Baker's yeast) protein is ATP-dependent permease AUS1 (AUS1).